The following is a 309-amino-acid chain: 4-hydroxy-3-methylbut-2-enyl diphosphate reductase (309 aa).

Cys12 is a binding site for [4Fe-4S] cluster. (2E)-4-hydroxy-3-methylbut-2-enyl diphosphate contacts are provided by His41 and His74. The dimethylallyl diphosphate site is built by His41 and His74. Isopentenyl diphosphate is bound by residues His41 and His74. Residue Cys96 coordinates [4Fe-4S] cluster. His124 is a binding site for (2E)-4-hydroxy-3-methylbut-2-enyl diphosphate. Residue His124 coordinates dimethylallyl diphosphate. His124 is an isopentenyl diphosphate binding site. Glu126 (proton donor) is an active-site residue. Thr167 lines the (2E)-4-hydroxy-3-methylbut-2-enyl diphosphate pocket. Cys197 is a binding site for [4Fe-4S] cluster. Ser225, Ser226, Asn227, and Ser269 together coordinate (2E)-4-hydroxy-3-methylbut-2-enyl diphosphate. Residues Ser225, Ser226, Asn227, and Ser269 each coordinate dimethylallyl diphosphate. The isopentenyl diphosphate site is built by Ser225, Ser226, Asn227, and Ser269.

It belongs to the IspH family. It depends on [4Fe-4S] cluster as a cofactor.

It carries out the reaction isopentenyl diphosphate + 2 oxidized [2Fe-2S]-[ferredoxin] + H2O = (2E)-4-hydroxy-3-methylbut-2-enyl diphosphate + 2 reduced [2Fe-2S]-[ferredoxin] + 2 H(+). The catalysed reaction is dimethylallyl diphosphate + 2 oxidized [2Fe-2S]-[ferredoxin] + H2O = (2E)-4-hydroxy-3-methylbut-2-enyl diphosphate + 2 reduced [2Fe-2S]-[ferredoxin] + 2 H(+). It participates in isoprenoid biosynthesis; dimethylallyl diphosphate biosynthesis; dimethylallyl diphosphate from (2E)-4-hydroxy-3-methylbutenyl diphosphate: step 1/1. It functions in the pathway isoprenoid biosynthesis; isopentenyl diphosphate biosynthesis via DXP pathway; isopentenyl diphosphate from 1-deoxy-D-xylulose 5-phosphate: step 6/6. In terms of biological role, catalyzes the conversion of 1-hydroxy-2-methyl-2-(E)-butenyl 4-diphosphate (HMBPP) into a mixture of isopentenyl diphosphate (IPP) and dimethylallyl diphosphate (DMAPP). Acts in the terminal step of the DOXP/MEP pathway for isoprenoid precursor biosynthesis. The sequence is that of 4-hydroxy-3-methylbut-2-enyl diphosphate reductase from Shewanella halifaxensis (strain HAW-EB4).